The following is a 75-amino-acid chain: RNA-binding protein Hfq (75 aa).

The Sm domain maps to 9 to 69; sequence DQFLNQLRKE…ISTFAPERNI (61 aa).

The protein belongs to the Hfq family. As to quaternary structure, homohexamer.

RNA chaperone that binds small regulatory RNA (sRNAs) and mRNAs to facilitate mRNA translational regulation in response to envelope stress, environmental stress and changes in metabolite concentrations. Also binds with high specificity to tRNAs. This chain is RNA-binding protein Hfq, found in Geobacillus kaustophilus (strain HTA426).